Reading from the N-terminus, the 820-residue chain is MNSDGRHHQSSSGAPRGPANPGQRGQVPPDDRLTAILPPVTDDRSAPHADSIEAVKAALDGAPPMPPPRDPLEEVTAALAAPPGKPPRGDQLGGRRRPPGPPGPPGSSGQPAGRLPQPRVDLPRVGQINWKWIRRSLYLTAAVVILLPMVTFTMAYLIVDVPKPGDIRTNQVSTILASDGSEIAKIVPPEGNRVDVNLSQVPMHVRQAVIAAEDRNFYSNPGFSFTGFARAVKNNLFGGDLQGGSTITQQYVKNALVGSAQHGWSGLMRKAKELVIATKMSGEWSKDDVLQAYLNIIYFGRGAYGISAASKAYFDKPVEQLTVAEGALLAALIRRPSTLDPAVDPEGAHARWNWVLDGMVETKALSPNDRAAQVFPETVPPDLARAENQTKGPNGLIERQVTRELLELFNIDEQTLNTQGLVVTTTIDPQAQRAAEKAVAKYLDGQDPDMRAAVVSIDPHNGAVRAYYGGDNANGFDFAQAGLQTGSSFKVFALVAALEQGIGLGYQVDSSPLTVDGIKITNVEGEGCGTCNIAEALKMSLNTSYYRLMLKLNGGPQAVADAAHQAGIASSFPGVAHTLSEDGKGGPPNNGIVLGQYQTRVIDMASAYATLAASGIYHPPHFVQKVVSANGQVLFDASTADNTGDQRIPKAVADNVTAAMEPIAGYSRGHNLAGGRDSAAKTGTTQFGDTTANKDAWMVGYTPSLSTAVWVGTVKGDEPLVTASGAAIYGSGLPSDIWKATMDGALKGTSNETFPKPTEVGGYAGVPPPPPPPEVPPSETVIQPTVEIAPGITIPIGPPTTITLAPPPPAPPAATPTPPP.

The disordered stretch occupies residues Met1–Val120. Positions Thr41–Glu53 are enriched in basic and acidic residues. Residues Leu139 to Val159 traverse the membrane as a helical segment. Residues Gly180 to Val360 are transglycosylase. The Proton donor; for transglycosylase activity role is filled by Glu213. The transpeptidase stretch occupies residues Ala453 to Asp743. Ser487 acts as the Acyl-ester intermediate; for transpeptidase activity in catalysis. Residues Ile792 to Leu804 are compositionally biased toward low complexity. Residues Ile792 to Pro820 form a disordered region. Pro residues predominate over residues Ala805–Pro820.

It in the N-terminal section; belongs to the glycosyltransferase 51 family. This sequence in the C-terminal section; belongs to the transpeptidase family. As to quaternary structure, interacts with RipA via its transpeptidase domain (residues 561-820).

The protein resides in the cell membrane. It catalyses the reaction [GlcNAc-(1-&gt;4)-Mur2Ac(oyl-L-Ala-gamma-D-Glu-L-Lys-D-Ala-D-Ala)](n)-di-trans,octa-cis-undecaprenyl diphosphate + beta-D-GlcNAc-(1-&gt;4)-Mur2Ac(oyl-L-Ala-gamma-D-Glu-L-Lys-D-Ala-D-Ala)-di-trans,octa-cis-undecaprenyl diphosphate = [GlcNAc-(1-&gt;4)-Mur2Ac(oyl-L-Ala-gamma-D-Glu-L-Lys-D-Ala-D-Ala)](n+1)-di-trans,octa-cis-undecaprenyl diphosphate + di-trans,octa-cis-undecaprenyl diphosphate + H(+). The catalysed reaction is Preferential cleavage: (Ac)2-L-Lys-D-Ala-|-D-Ala. Also transpeptidation of peptidyl-alanyl moieties that are N-acyl substituents of D-alanine.. Its pathway is cell wall biogenesis; peptidoglycan biosynthesis. Functionally, cell wall formation. Synthesis of cross-linked peptidoglycan from the lipid intermediates. The enzyme has a penicillin-insensitive transglycosylase N-terminal domain (formation of linear glycan strands) and a penicillin-sensitive transpeptidase C-terminal domain (cross-linking of the peptide subunits). Has little peptidoglycan hydrolytic activity; however it inhibits the synergistic peptidoglycan hydrolysis of RipA plus RpfB. This is Penicillin-binding protein 1A (ponA1) from Mycobacterium tuberculosis (strain ATCC 25618 / H37Rv).